Reading from the N-terminus, the 303-residue chain is Methionyl-tRNA formyltransferase (303 aa).

108–111 (SDLP) serves as a coordination point for (6S)-5,6,7,8-tetrahydrofolate.

Belongs to the Fmt family.

The catalysed reaction is L-methionyl-tRNA(fMet) + (6R)-10-formyltetrahydrofolate = N-formyl-L-methionyl-tRNA(fMet) + (6S)-5,6,7,8-tetrahydrofolate + H(+). Its function is as follows. Attaches a formyl group to the free amino group of methionyl-tRNA(fMet). The formyl group appears to play a dual role in the initiator identity of N-formylmethionyl-tRNA by promoting its recognition by IF2 and preventing the misappropriation of this tRNA by the elongation apparatus. This Rickettsia prowazekii (strain Madrid E) protein is Methionyl-tRNA formyltransferase.